The primary structure comprises 103 residues: Large ribosomal subunit protein bL21 (103 aa).

The protein belongs to the bacterial ribosomal protein bL21 family. In terms of assembly, part of the 50S ribosomal subunit. Contacts protein L20.

Its function is as follows. This protein binds to 23S rRNA in the presence of protein L20. The protein is Large ribosomal subunit protein bL21 of Mycolicibacterium smegmatis (strain ATCC 700084 / mc(2)155) (Mycobacterium smegmatis).